The chain runs to 977 residues: AP-2 complex subunit alpha-1 (977 aa).

The interval 614-702 (AKLKRKKGPG…PSLGPTPEEA (89 aa)) is disordered. A phosphoserine mark is found at Ser626 and Ser652. Positions 646–657 (PTPSTVSTPSPS) are enriched in low complexity. Thr653 bears the Phosphothreonine mark. Ser655 is modified (phosphoserine). Over residues 666–675 (APPPAAPPAP) the composition is skewed to pro residues.

This sequence belongs to the adaptor complexes large subunit family. In terms of assembly, adaptor protein complex 2 (AP-2) is a heterotetramer composed of two large adaptins (alpha-type subunit AP2A1 or AP2A2 and beta-type subunit AP2B1), a medium adaptin (mu-type subunit AP2M1) and a small adaptin (sigma-type subunit AP2S1). Interacts with HIP1 and RAB11FIP2. Interacts with SLC12A5. Interacts with clathrin. Interacts with SGIP1. Interacts with RFTN1. Interacts with KIAA1107. Interacts with PICALM. Together with AP2B1 and AP2M1, it interacts with ADAM10; this interaction facilitates ADAM10 endocytosis from the plasma membrane during long-term potentiation in hippocampal neurons. Interacts with ABCB11; this interaction regulates cell membrane expression of ABCB11 through its internalization in a clathrin-dependent manner and its subsequent degradation. Probably interacts with ACE2 (via endocytic sorting signal motif); the interaction is inhibited by ACE2 phosphorylation. As to expression, expressed in the brain (at protein level). Isoform A: Expressed only in neuronal tissue and skeletal muscle. Isoform B: Widely expressed.

It localises to the cell membrane. Its subcellular location is the membrane. It is found in the coated pit. Its function is as follows. Component of the adaptor protein complex 2 (AP-2). Adaptor protein complexes function in protein transport via transport vesicles in different membrane traffic pathways. Adaptor protein complexes are vesicle coat components and appear to be involved in cargo selection and vesicle formation. AP-2 is involved in clathrin-dependent endocytosis in which cargo proteins are incorporated into vesicles surrounded by clathrin (clathrin-coated vesicles, CCVs) which are destined for fusion with the early endosome. The clathrin lattice serves as a mechanical scaffold but is itself unable to bind directly to membrane components. Clathrin-associated adaptor protein (AP) complexes which can bind directly to both the clathrin lattice and to the lipid and protein components of membranes are considered to be the major clathrin adaptors contributing the CCV formation. AP-2 also serves as a cargo receptor to selectively sort the membrane proteins involved in receptor-mediated endocytosis. AP-2 seems to play a role in the recycling of synaptic vesicle membranes from the presynaptic surface. AP-2 recognizes Y-X-X-[FILMV] (Y-X-X-Phi) and [ED]-X-X-X-L-[LI] endocytosis signal motifs within the cytosolic tails of transmembrane cargo molecules. AP-2 may also play a role in maintaining normal post-endocytic trafficking through the ARF6-regulated, non-clathrin pathway. The AP-2 alpha subunit binds polyphosphoinositide-containing lipids, positioning AP-2 on the membrane. During long-term potentiation in hippocampal neurons, AP-2 is responsible for the endocytosis of ADAM10. The AP-2 alpha subunit acts via its C-terminal appendage domain as a scaffolding platform for endocytic accessory proteins. The AP-2 alpha and AP-2 sigma subunits are thought to contribute to the recognition of the [ED]-X-X-X-L-[LI] motif. The protein is AP-2 complex subunit alpha-1 (Ap2a1) of Mus musculus (Mouse).